We begin with the raw amino-acid sequence, 372 residues long: sn-glycerol-3-phosphate import ATP-binding protein UgpC (372 aa).

An ABC transporter domain is found at 2–233 (LDIQQLVKTY…PASTFVASFI (232 aa)). 35–42 (GPSGCGKS) is an ATP binding site.

It belongs to the ABC transporter superfamily. sn-glycerol-3-phosphate importer (TC 3.A.1.1.3) family. As to quaternary structure, the complex is composed of two ATP-binding proteins (UgpC), two transmembrane proteins (UgpA and UgpE) and a solute-binding protein (UgpB).

The protein resides in the cell inner membrane. It carries out the reaction sn-glycerol 3-phosphate(out) + ATP + H2O = sn-glycerol 3-phosphate(in) + ADP + phosphate + H(+). Its function is as follows. Part of the ABC transporter complex UgpBAEC involved in sn-glycerol-3-phosphate (G3P) import. Responsible for energy coupling to the transport system. The sequence is that of sn-glycerol-3-phosphate import ATP-binding protein UgpC from Vibrio vulnificus (strain CMCP6).